The primary structure comprises 319 residues: Heavy metal-associated isoprenylated plant protein 9 (319 aa).

2 stretches are compositionally biased toward basic and acidic residues: residues 1-11 (MGEEVKPEAKE) and 24-45 (EEKK…KPKE). A disordered region spans residues 1 to 57 (MGEEVKPEAKEAASAPQAVPAEEEEKKKDVAEEKKVAAEEEKPKEEEEPQPPPPPPP). Residues 21 to 48 (AEEEEKKKDVAEEKKVAAEEEKPKEEEE) are a coiled coil. 2 consecutive HMA domains span residues 55 to 118 (PPPF…KRMA) and 144 to 208 (LTTV…KQAR). The a metal cation site is built by C66, C69, C155, and C158. A disordered region spans residues 207–282 (ARIVPQPDPE…RDNEMTAMAQ (76 aa)). Residues 224–254 (QEEKKEESGEGNEKPPETGEEKEEEKKKEGE) are compositionally biased toward basic and acidic residues. Residues 255–268 (ENGEEGGGEEAAAT) show a composition bias toward acidic residues. C316 carries the cysteine methyl ester modification. C316 carries the S-farnesyl cysteine lipid modification. The propeptide at 317-319 (CIS) is removed in mature form.

It belongs to the HIPP family.

Functionally, heavy-metal-binding protein. This is Heavy metal-associated isoprenylated plant protein 9 from Arabidopsis thaliana (Mouse-ear cress).